The following is a 570-amino-acid chain: Sulfite reductase [NADPH] hemoprotein beta-component (570 aa).

C434, C440, C479, and C483 together coordinate [4Fe-4S] cluster. C483 serves as a coordination point for siroheme.

Belongs to the nitrite and sulfite reductase 4Fe-4S domain family. As to quaternary structure, alpha(8)-beta(8). The alpha component is a flavoprotein, the beta component is a hemoprotein. It depends on siroheme as a cofactor. The cofactor is [4Fe-4S] cluster.

The enzyme catalyses hydrogen sulfide + 3 NADP(+) + 3 H2O = sulfite + 3 NADPH + 4 H(+). The protein operates within sulfur metabolism; hydrogen sulfide biosynthesis; hydrogen sulfide from sulfite (NADPH route): step 1/1. Component of the sulfite reductase complex that catalyzes the 6-electron reduction of sulfite to sulfide. This is one of several activities required for the biosynthesis of L-cysteine from sulfate. In Salmonella newport (strain SL254), this protein is Sulfite reductase [NADPH] hemoprotein beta-component.